We begin with the raw amino-acid sequence, 192 residues long: Calcium-binding protein K (192 aa).

EF-hand domains lie at 60–95 (WDEASMVRMFTLFDSDGNGVIDVKEFITALYLMAKA) and 96–131 (PTLDKLGFFFDLFDSDKSGYLEREEVDKLVNIVVCC). Residues Asp-73, Asp-75, Asn-77, Glu-84, Asp-109, Asp-111, Ser-113, Tyr-115, and Glu-120 each coordinate Ca(2+).

This sequence belongs to the recoverin family.

This chain is Calcium-binding protein K (cbpK), found in Dictyostelium discoideum (Social amoeba).